The primary structure comprises 758 residues: ATP-dependent RNA helicase dbp7 (758 aa).

Disordered regions lie at residues 28 to 98 (TWRD…NQPR) and 110 to 130 (EPQKAEEVKEEGHVENAKPTN). Over residues 35–45 (AKKIAKHHAKG) the composition is skewed to basic residues. Residues 84–98 (GKQQSHGHPHSNQPR) are compositionally biased toward polar residues. Residues 110-125 (EPQKAEEVKEEGHVEN) show a composition bias toward basic and acidic residues. The Q motif signature appears at 138 to 167 (DTFTNLGLSPNLAAHLLTKLELKAPTAIQK). The region spanning 171 to 372 (SQLLKEEGDA…EISLKDAVHI (202 aa)) is the Helicase ATP-binding domain. ATP is bound at residue 184–191 (AETGSGKT). The DEAD box signature appears at 308 to 311 (DEGD). The Helicase C-terminal domain maps to 398 to 620 (QLKQSYAVVA…NVESGNKDWE (223 aa)). 2 stretches are compositionally biased toward basic and acidic residues: residues 455–471 (KEDGGEPSDTDKSEEKP) and 697–709 (GKEETKKDFKAER). Disordered stretches follow at residues 455 to 483 (KEDGGEPSDTDKSEEKPPSSPHGTIAPAT) and 697 to 745 (GKEE…RAKM).

This sequence belongs to the DEAD box helicase family. DDX31/DBP7 subfamily.

The protein localises to the nucleus. Its subcellular location is the nucleolus. It carries out the reaction ATP + H2O = ADP + phosphate + H(+). In terms of biological role, ATP-binding RNA helicase involved in the biogenesis of 60S ribosomal subunits and is required for the normal formation of 25S and 5.8S rRNAs. The chain is ATP-dependent RNA helicase dbp7 (dbp7) from Aspergillus fumigatus (strain ATCC MYA-4609 / CBS 101355 / FGSC A1100 / Af293) (Neosartorya fumigata).